Consider the following 351-residue polypeptide: Ion-translocating oxidoreductase complex subunit D (351 aa).

4 consecutive transmembrane segments (helical) span residues 18–38, 42–62, 87–107, and 121–141; these read IMLL…YFFG, LIQV…VLHL, LPPL…IIIA, and PAMV…TSWL. The residue at position 185 (Thr185) is an FMN phosphoryl threonine. The next 5 helical transmembrane spans lie at 212–232, 241–261, 264–284, 298–318, and 320–340; these read LAGI…LLLL, IPVS…MIAP, FAPP…FFIA, LIFG…GGYP, and GVAF…HYTQ.

It belongs to the NqrB/RnfD family. The complex is composed of six subunits: RnfA, RnfB, RnfC, RnfD, RnfE and RnfG. It depends on FMN as a cofactor.

The protein resides in the cell inner membrane. Functionally, part of a membrane-bound complex that couples electron transfer with translocation of ions across the membrane. This is Ion-translocating oxidoreductase complex subunit D from Yersinia enterocolitica serotype O:8 / biotype 1B (strain NCTC 13174 / 8081).